The primary structure comprises 1050 residues: Isoleucine--tRNA ligase (1050 aa).

Positions 45–56 match the 'HIGH' region motif; it reads PYPSSPIPHIGT. A 'KMSKS' region motif is present at residues 594-598; that stretch reads EMHKS. Position 597 (K597) interacts with ATP.

The protein belongs to the class-I aminoacyl-tRNA synthetase family. IleS type 2 subfamily. As to quaternary structure, monomer. Requires Zn(2+) as cofactor.

It is found in the cytoplasm. It catalyses the reaction tRNA(Ile) + L-isoleucine + ATP = L-isoleucyl-tRNA(Ile) + AMP + diphosphate. Catalyzes the attachment of isoleucine to tRNA(Ile). As IleRS can inadvertently accommodate and process structurally similar amino acids such as valine, to avoid such errors it has two additional distinct tRNA(Ile)-dependent editing activities. One activity is designated as 'pretransfer' editing and involves the hydrolysis of activated Val-AMP. The other activity is designated 'posttransfer' editing and involves deacylation of mischarged Val-tRNA(Ile). In Sulfolobus acidocaldarius (strain ATCC 33909 / DSM 639 / JCM 8929 / NBRC 15157 / NCIMB 11770), this protein is Isoleucine--tRNA ligase.